The following is a 628-amino-acid chain: Netrin-4 (628 aa).

The signal sequence occupies residues 1–18 (MGSCARLLLLWGCTVVAA). A Laminin N-terminal domain is found at 30–261 (CEKACNPRMG…AIYDFIVKGS (232 aa)). N-linked (GlcNAc...) asparagine glycans are attached at residues N56 and N163. Intrachain disulfides connect C262–C271, C264–C293, C295–C304, C307–C329, C332–C341, C334–C359, C362–C371, C374–C392, C395–C413, C397–C420, C422–C431, and C434–C446. Laminin EGF-like domains follow at residues 262–331 (CFCN…ECRT), 332–394 (CKCN…ACKP), and 395–448 (CSCH…GCRP). The N-linked (GlcNAc...) asparagine glycan is linked to N353. N483 carries N-linked (GlcNAc...) asparagine glycosylation. Intrachain disulfides connect C506–C576 and C520–C627. The NTR domain maps to 506–627 (CECKEQTLGN…KVMDILKREC (122 aa)).

May form a homodimer. Expressed in kidney, spleen, mammary gland, aorta, heart, ovary, prostate and fetal spleen.

The protein localises to the secreted. It is found in the extracellular space. Its subcellular location is the extracellular matrix. The protein resides in the basement membrane. Functionally, may play an important role in neural, kidney and vascular development. Promotes neurite elongation from olfactory bulb explants. The chain is Netrin-4 (NTN4) from Homo sapiens (Human).